The sequence spans 468 residues: Transmembrane protein 151B (468 aa).

Residues 1 to 25 (MPEDGGGDSGDVPEIIPDGEPLREE) are disordered. Transmembrane regions (helical) follow at residues 45–65 (CLLLTLLIHACGAVVAWCRLA) and 98–118 (YLYIPLAFVSLLYLLYLAECW). The tract at residues 384 to 438 (VSSNSLPPARPSGPRLPFSRSRLSLGAGGRATPGVFRSLSGGPLGRRGEDTEPLE) is disordered.

Belongs to the TMEM151 family.

Its subcellular location is the membrane. The sequence is that of Transmembrane protein 151B (TMEM151B) from Bos taurus (Bovine).